A 284-amino-acid polypeptide reads, in one-letter code: L-fucose dehydrogenase (284 aa).

12 residues coordinate NAD(+): arginine 19, isoleucine 21, aspartate 40, lysine 41, aspartate 62, valine 63, asparagine 89, tyrosine 154, lysine 158, isoleucine 187, threonine 189, and leucine 191.

It belongs to the short-chain dehydrogenases/reductases (SDR) family.

The enzyme catalyses L-fucose + NAD(+) = L-fucono-1,5-lactone + NADH + H(+). It carries out the reaction D-arabinose + NAD(+) = D-arabinono-1,5-lactone + NADH + H(+). It catalyses the reaction L-galactose + NAD(+) = L-galactono-1,5-lactone + NADH + H(+). It participates in carbohydrate degradation; L-fucose degradation. Catalyzes the NAD(+)-dependent oxidation of L-fucose, yielding L-fucono-1,5-lactone, which rapidly converts spontaneously to L-fucone-1,4-lactone. Can also act on D-arabinose and L-galactose, with lower catalytic efficiency. Does not use NADPH. May be the initial enzyme of the putative L-fucose degradation pathway in mammals. This chain is L-fucose dehydrogenase (HSD17B14), found in Oryctolagus cuniculus (Rabbit).